A 194-amino-acid chain; its full sequence is Thymidine kinase (194 aa).

ATP contacts are provided by residues 15-22 (GSMFSGKS) and 88-91 (DEVQ). Catalysis depends on Glu89, which acts as the Proton acceptor. Zn(2+) is bound by residues Cys145, Cys148, Cys183, and Cys186.

Belongs to the thymidine kinase family. As to quaternary structure, homotetramer.

The protein resides in the cytoplasm. The enzyme catalyses thymidine + ATP = dTMP + ADP + H(+). This is Thymidine kinase from Bacillus anthracis (strain A0248).